The sequence spans 155 residues: RNA pyrophosphohydrolase (155 aa).

Residues K5–A147 form the Nudix hydrolase domain. Positions G42–G63 match the Nudix box motif.

This sequence belongs to the Nudix hydrolase family. RppH subfamily. It depends on a divalent metal cation as a cofactor.

Accelerates the degradation of transcripts by removing pyrophosphate from the 5'-end of triphosphorylated RNA, leading to a more labile monophosphorylated state that can stimulate subsequent ribonuclease cleavage. This Helicobacter pylori (strain G27) protein is RNA pyrophosphohydrolase.